The sequence spans 236 residues: MGQKINPIGLRLGVNRTWDSRWYADSGEYGRLLHEDLSIRLYVLEELKQAAISKVIIERPHKKCRVTIYSARPGLIIGKKGADIEKLRRKLSEMTNAETSLNIVEIHKPEIDATIIAQSIAQQLERRVAFRRAMKRAVQSAMRLGAEGIRINCSGRLGGAEIARMEWYREGRVPLHTLRSDVDYGTAEAKTAYGICGVKVWVFKGEILEYDPIASERRSVEIDHSGSSSNRRRENA.

The 69-residue stretch at 39-107 (IRLYVLEELK…ETSLNIVEIH (69 aa)) folds into the KH type-2 domain.

This sequence belongs to the universal ribosomal protein uS3 family. Part of the 30S ribosomal subunit. Forms a tight complex with proteins S10 and S14.

Its function is as follows. Binds the lower part of the 30S subunit head. Binds mRNA in the 70S ribosome, positioning it for translation. The chain is Small ribosomal subunit protein uS3 from Bartonella quintana (strain Toulouse) (Rochalimaea quintana).